Reading from the N-terminus, the 488-residue chain is Bifunctional protein HldE (488 aa).

Positions 1 to 327 are ribokinase; it reads MDDTLAKLPR…GLAHGEHADP (327 aa). 201–204 is an ATP binding site; the sequence is NRRE. Asp272 is an active-site residue. Residues 354 to 488 are cytidylyltransferase; it reads FTNGCFDLLH…GRMNAPAVGG (135 aa).

This sequence in the N-terminal section; belongs to the carbohydrate kinase PfkB family. It in the C-terminal section; belongs to the cytidylyltransferase family. In terms of assembly, homodimer.

It carries out the reaction D-glycero-beta-D-manno-heptose 7-phosphate + ATP = D-glycero-beta-D-manno-heptose 1,7-bisphosphate + ADP + H(+). The catalysed reaction is D-glycero-beta-D-manno-heptose 1-phosphate + ATP + H(+) = ADP-D-glycero-beta-D-manno-heptose + diphosphate. It participates in nucleotide-sugar biosynthesis; ADP-L-glycero-beta-D-manno-heptose biosynthesis; ADP-L-glycero-beta-D-manno-heptose from D-glycero-beta-D-manno-heptose 7-phosphate: step 1/4. It functions in the pathway nucleotide-sugar biosynthesis; ADP-L-glycero-beta-D-manno-heptose biosynthesis; ADP-L-glycero-beta-D-manno-heptose from D-glycero-beta-D-manno-heptose 7-phosphate: step 3/4. Its function is as follows. Catalyzes the phosphorylation of D-glycero-D-manno-heptose 7-phosphate at the C-1 position to selectively form D-glycero-beta-D-manno-heptose-1,7-bisphosphate. In terms of biological role, catalyzes the ADP transfer from ATP to D-glycero-beta-D-manno-heptose 1-phosphate, yielding ADP-D-glycero-beta-D-manno-heptose. The polypeptide is Bifunctional protein HldE (Caulobacter sp. (strain K31)).